The following is a 634-amino-acid chain: Ankyrin repeat and SOCS box protein 2 (634 aa).

Positions serine 26 to glycine 45 constitute a UIM domain. A disordered region spans residues isoleucine 35–alanine 81. Residues alanine 49 to glutamine 60 are compositionally biased toward polar residues. 12 ANK repeats span residues alanine 104–glutamate 133, glutamate 137–glutamine 167, glutamine 171–isoleucine 200, serine 204–histidine 233, arginine 237–alanine 266, tyrosine 270–threonine 299, aspartate 303–lysine 332, aspartate 336–valine 365, serine 368–threonine 397, arginine 410–arginine 439, aspartate 440–alanine 469, and threonine 476–proline 504. Serine 371 bears the Phosphoserine mark. The 55-residue stretch at glutamate 580–glutamine 634 folds into the SOCS box domain.

This sequence belongs to the ankyrin SOCS box (ASB) family. In terms of assembly, component of a probable ECS E3 ubiquitin-protein ligase complex which contains CUL5, either RBX1 or RNF7/RBX2, Elongin BC complex (ELOB and ELOC) and ASB2. Interacts with SKP2. Through its interaction with SKP2, likely to bridge the formation of dimeric E3-ubiquitin-protein ligase complexes composed of an ECS complex and an SCF(SKP2) complex. Interacts with JAK2; the interaction targets JAK2 for Notch-mediated proteasomal degradation. Interacts with TCF3/E2A; the interaction is mediated by SKP2 and targets TCF3 for Notch-mediated proteasomal degradation. Interacts with DES. Monoubiquitinated.

The protein localises to the cytoplasm. The protein resides in the cytoskeleton. It is found in the stress fiber. Its subcellular location is the myofibril. It localises to the sarcomere. The protein localises to the z line. The protein operates within protein modification; protein ubiquitination. Its function is as follows. Substrate-recognition component of a SCF-like ECS (Elongin-Cullin-SOCS-box protein) E3 ubiquitin-protein ligase complex which mediates the ubiquitination and subsequent proteasomal degradation of target proteins. Mediates Notch-induced ubiquitination and degradation of substrates including E2A and JAK2. Required during embryonic heart development for complete heart looping. Required for cardiomyocyte differentiation. Involved in myogenic differentiation and targets filamin FLNB for proteasomal degradation but not filamin FLNA. Also targets DES for proteasomal degradation. Acts as a negative regulator of skeletal muscle mass. This chain is Ankyrin repeat and SOCS box protein 2, found in Rattus norvegicus (Rat).